Here is a 545-residue protein sequence, read N- to C-terminus: Protein BTN1 (545 aa).

A disordered region spans residues 23 to 49 (AHSSASDPRRTMVTNTSESPLASRQAT). A compositionally biased stretch (polar residues) spans 34–49 (MVTNTSESPLASRQAT). A run of 5 helical transmembrane segments spans residues 66-86 (AFFL…TAAL), 97-117 (LVSF…PYFL), 127-147 (VWSC…FPAL), 205-225 (VGWF…AWWV), and 234-254 (GMAI…IILP). The interval 276 to 304 (TEDDAVERSSSDDQPTTANDDRQDSTIHI) is disordered. Helical transmembrane passes span 322–342 (MALL…VYAM), 408–428 (LLWL…TESL), and 440–460 (LVIV…VSVF).

Belongs to the battenin family.

The protein resides in the vacuole membrane. In terms of biological role, involved in vacuolar transport and vacuole pH homeostasis. Also required for cytokinesis. The polypeptide is Protein BTN1 (BTN1) (Mycosarcoma maydis (Corn smut fungus)).